Here is a 456-residue protein sequence, read N- to C-terminus: Adenylosuccinate synthetase isozyme 2 (456 aa).

A disordered region spans residues 1–24; the sequence is MAFAETNPAASSLPNGDCGRPRAR. GTP is bound by residues 39–45 and 67–69; these read GDEGKGK and GHT. Asp40 serves as the catalytic Proton acceptor. Residues Asp40 and Gly67 each coordinate Mg(2+). Asp40 contributes to the substrate binding site. IMP-binding positions include 40-43, 65-68, Thr162, Arg176, Asn255, Thr270, and Arg334; these read DEGK and NAGH. The active-site Proton donor is His68. Substrate is bound at residue 330-336; it reads VTTGRKR. GTP contacts are provided by residues Arg336, 362-364, and 444-447; these read KLD and GVGK.

This sequence belongs to the adenylosuccinate synthetase family. As to quaternary structure, homodimer. Requires Mg(2+) as cofactor. In terms of tissue distribution, widely expressed.

Its subcellular location is the cytoplasm. It is found in the mitochondrion. It carries out the reaction IMP + L-aspartate + GTP = N(6)-(1,2-dicarboxyethyl)-AMP + GDP + phosphate + 2 H(+). It functions in the pathway purine metabolism; AMP biosynthesis via de novo pathway; AMP from IMP: step 1/2. Inhibited competitively by AMP and IMP and non-competitively by fructose 1,6-bisphosphate. In terms of biological role, plays an important role in the de novo pathway and in the salvage pathway of purine nucleotide biosynthesis. Catalyzes the first committed step in the biosynthesis of AMP from IMP. The sequence is that of Adenylosuccinate synthetase isozyme 2 from Sus scrofa (Pig).